The sequence spans 279 residues: Cell death abnormality protein 2 (279 aa).

In terms of domain architecture, SH2 spans 14 to 115 (FYFPGMSREE…EASLLAAYKK (102 aa)). Residues 116-176 (PIIEVVVGTF…PANYVQIQME (61 aa)) enclose the SH3 1 domain. The disordered stretch occupies residues 181-213 (RTSKGASQSSIGSSGGGAERFSSASTSSDNIEL). Polar residues predominate over residues 202–211 (SSASTSSDNI). The 64-residue stretch at 214–277 (QPRLPAKAKV…PHTYLRFTAV (64 aa)) folds into the SH3 2 domain.

This sequence belongs to the CRK family. In terms of assembly, interacts with ced-5 (via C-terminus which contains a candidate SH3-binding, proline-rich region). Forms a ternary complex with ced-5 and ced-12. Interacts (via SH2 domain) with src-1 (when activated and phosphorylated at 'Tyr-416').

Functionally, required for cell migration and engulfment of cell corpses but not for programmed cell death/apoptosis. Has a role in the migration of the 2 gonadal distal tip cells (DTCs). Plays a role in protecting dopaminergic neurons from oxidative stress-induced degeneration. The sequence is that of Cell death abnormality protein 2 from Caenorhabditis elegans.